The sequence spans 385 residues: UPF0744 protein YSD83 (385 aa).

The protein belongs to the UPF0744 family.

The chain is UPF0744 protein YSD83 (YSD83) from Saccharomyces paradoxus (Yeast).